The chain runs to 191 residues: Large ribosomal subunit protein uL5 (191 aa).

Belongs to the universal ribosomal protein uL5 family. Part of the 50S ribosomal subunit; part of the 5S rRNA/L5/L18/L25 subcomplex. Contacts the 5S rRNA and the P site tRNA. Forms a bridge to the 30S subunit in the 70S ribosome.

In terms of biological role, this is one of the proteins that bind and probably mediate the attachment of the 5S RNA into the large ribosomal subunit, where it forms part of the central protuberance. In the 70S ribosome it contacts protein S13 of the 30S subunit (bridge B1b), connecting the 2 subunits; this bridge is implicated in subunit movement. Contacts the P site tRNA; the 5S rRNA and some of its associated proteins might help stabilize positioning of ribosome-bound tRNAs. This Micrococcus luteus (Micrococcus lysodeikticus) protein is Large ribosomal subunit protein uL5.